The sequence spans 496 residues: Thiamine transporter 2 (496 aa).

Topologically, residues Met-1 to Ser-7 are cytoplasmic. Residues Pro-8–Met-28 form a helical membrane-spanning segment. Topologically, residues Arg-29–Asn-53 are extracellular. Asn-45 is a glycosylation site (N-linked (GlcNAc...) asparagine). Residues Glu-54 to Thr-74 form a helical membrane-spanning segment. Residues Asp-75–Pro-81 are Cytoplasmic-facing. Residues Val-82–Gly-102 form a helical membrane-spanning segment. Residues Val-103 to Glu-110 lie on the Extracellular side of the membrane. The chain crosses the membrane as a helical span at residues Phe-111 to Val-131. Over Ser-132–Arg-144 the chain is Cytoplasmic. A helical transmembrane segment spans residues Ser-145–Ala-165. N-linked (GlcNAc...) asparagine glycosylation occurs at Asn-166. Over Asn-166–Tyr-169 the chain is Extracellular. A helical transmembrane segment spans residues Phe-170 to Leu-190. Residues Pro-191–Ser-282 lie on the Cytoplasmic side of the membrane. The tract at residues Ser-210–Gln-248 is disordered. Residues Glu-218–Pro-233 show a composition bias toward basic and acidic residues. Positions Thr-234–Gln-248 are enriched in polar residues. A helical transmembrane segment spans residues Leu-283–Trp-303. At Asp-304–Asn-316 the chain is on the extracellular side. Residues Gly-317 to Val-337 form a helical membrane-spanning segment. The Cytoplasmic segment spans residues Lys-338–Asp-342. The helical transmembrane segment at Leu-343 to Met-363 threads the bilayer. Residues His-364 to Gly-375 are Extracellular-facing. The chain crosses the membrane as a helical span at residues Tyr-376–Val-396. The Cytoplasmic segment spans residues Asn-397–Leu-405. The chain crosses the membrane as a helical span at residues Val-406 to Val-426. Topologically, residues Asp-427–Pro-434 are extracellular. A helical transmembrane segment spans residues Ile-435–Met-455. The Cytoplasmic portion of the chain corresponds to Arg-456 to Leu-496. Residues Asp-469–Leu-496 form a disordered region.

Belongs to the reduced folate carrier (RFC) transporter (TC 2.A.48) family.

It localises to the membrane. The catalysed reaction is thiamine(out) + H(+)(in) = thiamine(in) + H(+)(out). The enzyme catalyses pyridoxine(out) + n H(+)(out) = pyridoxine(in) + n H(+)(in). In terms of biological role, mediates high affinity thiamine uptake, probably via a proton anti-port mechanism. Has no folate transport activity. Mediates H(+)-dependent pyridoxine transport. This chain is Thiamine transporter 2 (SLC19A3), found in Macaca fascicularis (Crab-eating macaque).